Here is a 329-residue protein sequence, read N- to C-terminus: DNA-directed RNA polymerase subunit alpha (329 aa).

The interval methionine 1–threonine 231 is alpha N-terminal domain (alpha-NTD). Residues glutamate 247 to aspartate 329 are alpha C-terminal domain (alpha-CTD).

This sequence belongs to the RNA polymerase alpha chain family. As to quaternary structure, homodimer. The RNAP catalytic core consists of 2 alpha, 1 beta, 1 beta' and 1 omega subunit. When a sigma factor is associated with the core the holoenzyme is formed, which can initiate transcription.

It carries out the reaction RNA(n) + a ribonucleoside 5'-triphosphate = RNA(n+1) + diphosphate. Its function is as follows. DNA-dependent RNA polymerase catalyzes the transcription of DNA into RNA using the four ribonucleoside triphosphates as substrates. This Cytophaga hutchinsonii (strain ATCC 33406 / DSM 1761 / CIP 103989 / NBRC 15051 / NCIMB 9469 / D465) protein is DNA-directed RNA polymerase subunit alpha.